The sequence spans 394 residues: Mannosyl-3-phosphoglycerate synthase (394 aa).

Belongs to the glycosyltransferase 2 family.

The protein resides in the cytoplasm. The enzyme catalyses (2R)-3-phosphoglycerate + GDP-alpha-D-mannose = 2-O-(alpha-D-mannosyl)-3-phosphoglycerate + GDP + H(+). The protein operates within carbohydrate biosynthesis; 2-(alpha-D-mannosyl)-D-glycerate biosynthesis; 2-(alpha-D-mannosyl)-D-glycerate from GDP-alpha-D-mannose (MPG route): step 1/2. Its function is as follows. Transfers a mannosyl group from GDP-mannose to phosphoglycerate to form mannosyl-3-phosphoglycerate (MPG). This chain is Mannosyl-3-phosphoglycerate synthase (mngA), found in Pyrococcus abyssi (strain GE5 / Orsay).